Reading from the N-terminus, the 488-residue chain is 3-octaprenyl-4-hydroxybenzoate carboxy-lyase (488 aa).

N172 serves as a coordination point for Mn(2+). Residues 175-177 (IYR), 189-191 (RWL), and 194-195 (RG) contribute to the prenylated FMN site. A Mn(2+)-binding site is contributed by E238. D287 acts as the Proton donor in catalysis.

Belongs to the UbiD family. Homohexamer. Requires prenylated FMN as cofactor. It depends on Mn(2+) as a cofactor.

It is found in the cell membrane. It catalyses the reaction a 4-hydroxy-3-(all-trans-polyprenyl)benzoate + H(+) = a 2-(all-trans-polyprenyl)phenol + CO2. Its pathway is cofactor biosynthesis; ubiquinone biosynthesis. Functionally, catalyzes the decarboxylation of 3-octaprenyl-4-hydroxy benzoate to 2-octaprenylphenol, an intermediate step in ubiquinone biosynthesis. This Pseudomonas fluorescens (strain ATCC BAA-477 / NRRL B-23932 / Pf-5) protein is 3-octaprenyl-4-hydroxybenzoate carboxy-lyase.